The chain runs to 602 residues: Elongation factor 4 (602 aa).

The region spanning 7–188 is the tr-type G domain; the sequence is ENIRNFSIIA…SIIRLVPPPK (182 aa). GTP-binding positions include 19 to 24 and 135 to 138; these read DHGKST and NKID.

Belongs to the TRAFAC class translation factor GTPase superfamily. Classic translation factor GTPase family. LepA subfamily.

It localises to the cell inner membrane. It carries out the reaction GTP + H2O = GDP + phosphate + H(+). Required for accurate and efficient protein synthesis under certain stress conditions. May act as a fidelity factor of the translation reaction, by catalyzing a one-codon backward translocation of tRNAs on improperly translocated ribosomes. Back-translocation proceeds from a post-translocation (POST) complex to a pre-translocation (PRE) complex, thus giving elongation factor G a second chance to translocate the tRNAs correctly. Binds to ribosomes in a GTP-dependent manner. The chain is Elongation factor 4 from Chlamydia trachomatis serovar A (strain ATCC VR-571B / DSM 19440 / HAR-13).